The chain runs to 572 residues: Mitochondrial distribution and morphology protein 34 (572 aa).

The SMP-LTD domain occupies 1–195; the sequence is MAFNFNWSPL…LPAIIHRLSL (195 aa). Disordered stretches follow at residues 210–239, 330–423, and 455–482; these read TQAEKAETANGEGPGQDPLASPPQDPVDAL, SASI…PLSP, and RDMGGPSSTSDPATQATQSEDTSATPRA. The span at 330 to 347 shows a compositional bias: polar residues; it reads SASIASMQTRSSTPSHTF. The span at 358–370 shows a compositional bias: basic residues; that stretch reads RHSKAHSRKRKKR. A compositionally biased stretch (basic and acidic residues) spans 371-381; that stretch reads VVDLRRPKTTD. Polar residues-rich tracts occupy residues 387 to 400 and 460 to 480; these read SDESAFTESTSAPS and PSSTSDPATQATQSEDTSATP.

Belongs to the MDM34 family. As to quaternary structure, component of the ER-mitochondria encounter structure (ERMES) or MDM complex, composed of mmm1, mdm10, mdm12 and mdm34.

The protein resides in the mitochondrion outer membrane. Functionally, component of the ERMES/MDM complex, which serves as a molecular tether to connect the endoplasmic reticulum (ER) and mitochondria. Components of this complex are involved in the control of mitochondrial shape and protein biogenesis, and function in nonvesicular lipid trafficking between the ER and mitochondria. Mdm34 is required for the interaction of the ER-resident membrane protein mmm1 and the outer mitochondrial membrane-resident beta-barrel protein mdm10. This chain is Mitochondrial distribution and morphology protein 34, found in Aspergillus clavatus (strain ATCC 1007 / CBS 513.65 / DSM 816 / NCTC 3887 / NRRL 1 / QM 1276 / 107).